A 185-amino-acid polypeptide reads, in one-letter code: Ribosome-recycling factor (185 aa).

Positions 143-163 (RKDGEAGEDEVARAEKDLDKS) are disordered.

This sequence belongs to the RRF family.

The protein localises to the cytoplasm. In terms of biological role, responsible for the release of ribosomes from messenger RNA at the termination of protein biosynthesis. May increase the efficiency of translation by recycling ribosomes from one round of translation to another. This is Ribosome-recycling factor from Mycobacterium ulcerans (strain Agy99).